We begin with the raw amino-acid sequence, 336 residues long: WAT1-related protein At2g37450 (336 aa).

A run of 9 helical transmembrane segments spans residues 7-27, 45-65, 79-99, 115-135, 160-180, 189-209, 227-247, 255-275, and 279-299; these read ALPF…DILT, HGVA…PVIA, TFAI…ALIF, VVGT…KGPA, GAVL…LQAI, LSLA…VALV, LTIT…GGVV, FVTA…SIIF, and MYLG…LVIW. EamA domains follow at residues 63-126 and 169-298; these read VIAQ…GGIM and FSYA…YLVI.

It belongs to the drug/metabolite transporter (DMT) superfamily. Plant drug/metabolite exporter (P-DME) (TC 2.A.7.4) family.

The protein resides in the membrane. This Arabidopsis thaliana (Mouse-ear cress) protein is WAT1-related protein At2g37450.